We begin with the raw amino-acid sequence, 80 residues long: Metallothionein-like protein type 2 (80 aa).

The protein belongs to the metallothionein superfamily. Type 15 family.

Its function is as follows. Metallothioneins have a high content of cysteine residues that bind various heavy metals. The polypeptide is Metallothionein-like protein type 2 (Brassica campestris (Field mustard)).